Here is a 367-residue protein sequence, read N- to C-terminus: MKRVVVLGSTGSIGQQALEVCRLRGYEVVGLAAGKNLEALSRQIALWKPRLVAAEESLHKELKARFPGLRLATAEEVAALEAEVAVAAIPGLAGLAPTRAAVRTGKRVALANKEAMVAAGPLLWREAEAHGAEILPVDSEHSALFQALLGERREDVAELILTASGGPFLREPEDLAQVTPEMALRHPRWRMGPKVTVDSATLFNKGLEVLEAKELFRFPLERIQVLIHPQAYVHGLVRFVDGSLKAQLGPTDMRLFIQYALTYPERAETPLKDLPIPGVLEFLEPDLKRFPALAVAYEAGRRGGLAQVAVSAADEVAVEAFLQGKIPFPRIPEILARVLEATPTEPLTWESLFAVDAWAREEAKRWA.

NADPH is bound by residues threonine 10, glycine 11, serine 12, isoleucine 13, glycine 34, lysine 35, asparagine 36, and asparagine 112. 1-deoxy-D-xylulose 5-phosphate is bound at residue lysine 113. Residue glutamate 114 coordinates NADPH. Aspartate 138 is a Mn(2+) binding site. 1-deoxy-D-xylulose 5-phosphate is bound by residues serine 139, glutamate 140, serine 164, and histidine 186. Mn(2+) is bound at residue glutamate 140. Glycine 192 is an NADPH binding site. The 1-deoxy-D-xylulose 5-phosphate site is built by serine 199, asparagine 204, lysine 205, and glutamate 208. Residue glutamate 208 participates in Mn(2+) binding.

This sequence belongs to the DXR family. The cofactor is Mg(2+). It depends on Mn(2+) as a cofactor.

The enzyme catalyses 2-C-methyl-D-erythritol 4-phosphate + NADP(+) = 1-deoxy-D-xylulose 5-phosphate + NADPH + H(+). It participates in isoprenoid biosynthesis; isopentenyl diphosphate biosynthesis via DXP pathway; isopentenyl diphosphate from 1-deoxy-D-xylulose 5-phosphate: step 1/6. Functionally, catalyzes the NADPH-dependent rearrangement and reduction of 1-deoxy-D-xylulose-5-phosphate (DXP) to 2-C-methyl-D-erythritol 4-phosphate (MEP). In Thermus thermophilus (strain ATCC BAA-163 / DSM 7039 / HB27), this protein is 1-deoxy-D-xylulose 5-phosphate reductoisomerase.